Consider the following 463-residue polypeptide: MGKLFGTDGIRGFANIYPMTVEVALKTGRAVARFAKEHGGTVVIIGRDTRRSGDMLEAALAAGISSMGINVLEAGVIPTPGVAFLTATVKGAGAGVVISASHNPFHDNGIKVFKSGGLKLTDPEEAKIESYIFDAGPDRADSSICEPKTSDSAIEPGTISTISNASAQYANFLTSCYQRDLDKNTPDQPLKIVVDCSNGASFKVAPMVFPTLGFETQFIFDTPDGKNINHNCGSQHTETLAKRVISTGADLGLAFDGDADRLIAIDEQGVKLTGDKILAICANHAKAQGRLTNNLVITTVMSNIGLSKALERLGIDHIKTGVGDREVLKEMWATGAVMGGEDSGHMIFSEFHSTGDGILSALCLIRVMVDTNKSLSDLATIMTVYPQVLMNVEVDPSRPDFMKIETIAREIKRVEQALNSSGRVLVRYSGTQPLLRVMVEGPDLEATKSHCQSICDAIKQASI.

Residue Ser-101 is the Phosphoserine intermediate of the active site. Mg(2+) contacts are provided by Ser-101, Asp-256, Asp-258, and Asp-260. Ser-101 is modified (phosphoserine).

This sequence belongs to the phosphohexose mutase family. Mg(2+) is required as a cofactor. Activated by phosphorylation.

It catalyses the reaction alpha-D-glucosamine 1-phosphate = D-glucosamine 6-phosphate. In terms of biological role, catalyzes the conversion of glucosamine-6-phosphate to glucosamine-1-phosphate. The chain is Phosphoglucosamine mutase from Desulforapulum autotrophicum (strain ATCC 43914 / DSM 3382 / VKM B-1955 / HRM2) (Desulfobacterium autotrophicum).